A 137-amino-acid chain; its full sequence is Large ribosomal subunit protein uL16 (137 aa).

The protein belongs to the universal ribosomal protein uL16 family. As to quaternary structure, part of the 50S ribosomal subunit.

Its function is as follows. Binds 23S rRNA and is also seen to make contacts with the A and possibly P site tRNAs. The polypeptide is Large ribosomal subunit protein uL16 (Streptococcus thermophilus (strain ATCC BAA-491 / LMD-9)).